The chain runs to 241 residues: Outer membrane protein assembly factor BamD (241 aa).

A signal peptide spans 1–17 (MKYQTLSGLLALSLLFG). Cys-18 is lipidated: N-palmitoyl cysteine. Cys-18 carries S-diacylglycerol cysteine lipidation.

The protein belongs to the BamD family. As to quaternary structure, part of the Bam complex.

It localises to the cell outer membrane. Functionally, part of the outer membrane protein assembly complex, which is involved in assembly and insertion of beta-barrel proteins into the outer membrane. The protein is Outer membrane protein assembly factor BamD of Vibrio cholerae serotype O1 (strain ATCC 39315 / El Tor Inaba N16961).